Here is a 312-residue protein sequence, read N- to C-terminus: HPr kinase/phosphorylase (312 aa).

Active-site residues include His-139 and Lys-160. Residue 154–161 participates in ATP binding; that stretch reads GDSGIGKS. Ser-161 is a binding site for Mg(2+). The active-site Proton acceptor; for phosphorylation activity. Proton donor; for dephosphorylation activity is Asp-178. Residues 202 to 211 are important for the catalytic mechanism of both phosphorylation and dephosphorylation; sequence IEIRGVGIID. Glu-203 contributes to the Mg(2+) binding site. The active site involves Arg-244. Residues 265 to 270 are important for the catalytic mechanism of dephosphorylation; the sequence is PVKTGR.

It belongs to the HPrK/P family. In terms of assembly, homohexamer. It depends on Mg(2+) as a cofactor.

The catalysed reaction is [HPr protein]-L-serine + ATP = [HPr protein]-O-phospho-L-serine + ADP + H(+). It carries out the reaction [HPr protein]-O-phospho-L-serine + phosphate + H(+) = [HPr protein]-L-serine + diphosphate. Functionally, catalyzes the ATP- as well as the pyrophosphate-dependent phosphorylation of a specific serine residue in HPr, a phosphocarrier protein of the phosphoenolpyruvate-dependent sugar phosphotransferase system (PTS). HprK/P also catalyzes the pyrophosphate-producing, inorganic phosphate-dependent dephosphorylation (phosphorolysis) of seryl-phosphorylated HPr (P-Ser-HPr). The two antagonistic activities of HprK/P are regulated by several intracellular metabolites, which change their concentration in response to the absence or presence of rapidly metabolisable carbon sources (glucose, fructose, etc.) in the growth medium. Therefore, by controlling the phosphorylation state of HPr, HPrK/P is a sensor enzyme that plays a major role in the regulation of carbon metabolism and sugar transport: it mediates carbon catabolite repression (CCR), and regulates PTS-catalyzed carbohydrate uptake and inducer exclusion. The sequence is that of HPr kinase/phosphorylase from Streptococcus pneumoniae serotype 4 (strain ATCC BAA-334 / TIGR4).